The primary structure comprises 630 residues: Alpha-1,3-mannosyltransferase MNT3 (630 aa).

Over 1 to 14 the chain is Cytoplasmic; sequence MLKSLKSRRLILKR. Residues 15–31 form a helical; Signal-anchor for type II membrane protein membrane-spanning segment; the sequence is LVTLLLSLFFSYLIFSA. Topologically, residues 32-630 are lumenal; that stretch reads SRNVTSSNKL…NDISRTWNAN (599 aa). Residues N34 and N168 are each glycosylated (N-linked (GlcNAc...) asparagine).

Belongs to the MNN1/MNT family.

The protein localises to the golgi apparatus membrane. The protein operates within protein modification; protein glycosylation. Its function is as follows. Mannosyltransferase involved in adding the 4th and 5th mannose residues of O-linked glycans. The chain is Alpha-1,3-mannosyltransferase MNT3 (MNT3) from Saccharomyces cerevisiae (strain ATCC 204508 / S288c) (Baker's yeast).